The sequence spans 805 residues: Kinesin-like protein Klp10A (805 aa).

The segment at 1 to 274 (MDMITVGQSV…FVPLLDGQAV (274 aa)) is globular. 2 disordered regions span residues 68–94 (QHAAPEPKKQATAPMNLSRNPTQSAIG) and 117–211 (IPNP…RRSH). A compositionally biased stretch (polar residues) spans 80 to 94 (APMNLSRNPTQSAIG). Residues 123-136 (SSNSVNTNSNSNTT) are compositionally biased toward low complexity. Serine 157 bears the Phosphoserine mark. A compositionally biased stretch (polar residues) spans 158-179 (QAATGQQQTRIASAVPNNTLPN). The span at 180 to 200 (PSAAASAGPAAQGVATAATTQ) shows a compositional bias: low complexity. A coiled-coil region spans residues 205-244 (ASTRRSHALKEVERLKENREKRRARQAEMKEEKVALMNQD). Positions 278–610 (QITVCVRKRP…LRYADRVKEL (333 aa)) constitute a Kinesin motor domain. 368-375 (GQTGSGKT) is an ATP binding site. The residue at position 630 (threonine 630) is a Phosphothreonine. A disordered region spans residues 633–688 (EEEEELNMVHPHSHQLHPNSHAPASQSNNQRAPASHHSGAVIHNNNNNNNKNGNAG). A compositionally biased stretch (polar residues) spans 648 to 664 (LHPNSHAPASQSNNQRA). Residues 676–688 (NNNNNNNKNGNAG) are compositionally biased toward low complexity. Phosphoserine occurs at positions 795, 797, and 800.

The protein belongs to the TRAFAC class myosin-kinesin ATPase superfamily. Kinesin family. MCAK/KIF2 subfamily. Interacts with Alms1a (via C-terminus). In terms of tissue distribution, expressed in male germline stem cells and spermatogonia (at protein level).

Its subcellular location is the cytoplasm. The protein resides in the cytoskeleton. It is found in the microtubule organizing center. It localises to the centrosome. The protein localises to the spindle pole. Its subcellular location is the chromosome. The protein resides in the centromere. In terms of biological role, required during anaphase to drive sister chromatid separation to promote flux by actively depolymerizing kinetochore microtubules at their pole-associated minus ends, thereby moving chromatids through a 'poleward flux'. Involved in asymmetric cell division of sensory organ precursor (SOP) cells by playing a role in the asymmetric localization of Sara-expressing endosomes to the pIIa daughter cell but not to the pIIb cell. Klp98A targets Sara-expressing endosomes to the central spindle which is symmetrically arranged in early cell division. During late cytokinesis, central spindle asymmetry is generated by enrichment of Patronin on the pIIb side which protects microtubules from depolymerization by Klp10A while unprotected microtubules on the pIIa side are disassembled by Klp10A, leading to the asymmetric delivery of Sara-expressing endosomes to the pIIa daughter cell. This Drosophila melanogaster (Fruit fly) protein is Kinesin-like protein Klp10A.